The primary structure comprises 185 residues: Transcription factor E (185 aa).

The HTH TFE/IIEalpha-type domain occupies 5–88 (KNKELLEIAQ…YWRLETKKLP (84 aa)).

The protein belongs to the TFE family. Monomer. Interaction with RNA polymerase subunits RpoF and RpoE is necessary for Tfe stimulatory transcription activity. Able to interact with Tbp and RNA polymerase in the absence of DNA promoter. Interacts both with the preinitiation and elongation complexes.

Transcription factor that plays a role in the activation of archaeal genes transcribed by RNA polymerase. Facilitates transcription initiation by enhancing TATA-box recognition by TATA-box-binding protein (Tbp), and transcription factor B (Tfb) and RNA polymerase recruitment. Not absolutely required for transcription in vitro, but particularly important in cases where Tbp or Tfb function is not optimal. It dynamically alters the nucleic acid-binding properties of RNA polymerases by stabilizing the initiation complex and destabilizing elongation complexes. Seems to translocate with the RNA polymerase following initiation and acts by binding to the non template strand of the transcription bubble in elongation complexes. This is Transcription factor E from Thermococcus kodakarensis (strain ATCC BAA-918 / JCM 12380 / KOD1) (Pyrococcus kodakaraensis (strain KOD1)).